The primary structure comprises 132 residues: Small ribosomal subunit protein uS8 (132 aa).

Belongs to the universal ribosomal protein uS8 family. Part of the 30S ribosomal subunit. Contacts proteins S5 and S12.

Its function is as follows. One of the primary rRNA binding proteins, it binds directly to 16S rRNA central domain where it helps coordinate assembly of the platform of the 30S subunit. In Lactococcus lactis subsp. lactis (strain IL1403) (Streptococcus lactis), this protein is Small ribosomal subunit protein uS8.